The sequence spans 1405 residues: DNA-directed RNA polymerase subunit beta' (1405 aa).

Residues Cys70, Cys72, Cys85, and Cys88 each coordinate Zn(2+). Mg(2+)-binding residues include Asp460, Asp462, and Asp464. The Zn(2+) site is built by Cys815, Cys890, Cys897, and Cys900.

Belongs to the RNA polymerase beta' chain family. In terms of assembly, the RNAP catalytic core consists of 2 alpha, 1 beta, 1 beta' and 1 omega subunit. When a sigma factor is associated with the core the holoenzyme is formed, which can initiate transcription. Requires Mg(2+) as cofactor. Zn(2+) serves as cofactor.

It catalyses the reaction RNA(n) + a ribonucleoside 5'-triphosphate = RNA(n+1) + diphosphate. DNA-dependent RNA polymerase catalyzes the transcription of DNA into RNA using the four ribonucleoside triphosphates as substrates. The polypeptide is DNA-directed RNA polymerase subunit beta' (Xanthomonas campestris pv. campestris (strain B100)).